Consider the following 146-residue polypeptide: Hydroxyproline-rich systemin (146 aa).

The N-terminal stretch at 1–24 (MISFFRAFFLIIIISFLIFVGAQA) is a signal peptide. A propeptide spanning residues 25–48 (RTLLGNYHDDEMLIELKLESGNYG) is cleaved from the precursor. Residues 47 to 128 (YGRTPYKTPP…PPPPKPQDEQ (82 aa)) are disordered. 4-hydroxyproline is present on residues Pro-51, Pro-55, Pro-56, Pro-57, Pro-58, and Pro-63. 6 O-linked (Ara...) hydroxyproline glycosylation sites follow: Pro-51, Pro-55, Pro-56, Pro-57, Pro-58, and Pro-63. Positions 67-70 (EIVN) are excised as a propeptide. Pro-79, Pro-80, and Pro-82 each carry 4-hydroxyproline. O-linked (Ara...) hydroxyproline glycans are attached at residues Pro-79, Pro-80, and Pro-82. The propeptide occupies 86–110 (PIIGQLTTITTTPHHDDTVAAPPVG). Pro-119, Pro-120, Pro-121, and Pro-122 each carry 4-hydroxyproline. Residues Pro-119, Pro-120, Pro-121, and Pro-122 are each glycosylated (O-linked (Ara...) hydroxyproline). A propeptide spanning residues 131–146 (IIITSSSSTLPLQASY) is cleaved from the precursor.

Post-translationally, O-glycosylated; contains pentose side chains. In terms of tissue distribution, leaves.

Its subcellular location is the secreted. Its function is as follows. Activates a lipid-based signal transduction pathway in which linolenic acid is converted to jasmonic acid, a potent activator of defense gene transcription. Induces synthesis of proteinase inhibitors I and II in leaves when supplied through cut stems. In Solanum lycopersicum (Tomato), this protein is Hydroxyproline-rich systemin.